A 207-amino-acid polypeptide reads, in one-letter code: MDTLIREFDVALRAIAGATRAERANPADRLAPETEQMNPEERRHVSGLMRINHVGEVCAQALYQAQKLTARTPAVRAQMDAAAKEEEDHLAWCADRLRELGSRPSLLNPVWYAGAFAIGVLAGRAGDKVSLGFVAETERQVEHHLTSHLDRLPTTDSRSRAILEQMRDDEVRHGDAARNAGGIPLPGPVRALMQVASRVMTTTAYRI.

A compositionally biased stretch (basic and acidic residues) spans 22 to 32 (ERANPADRLAP). The disordered stretch occupies residues 22-41 (ERANPADRLAPETEQMNPEE). Fe cation-binding residues include Glu-56, Glu-86, His-89, Glu-138, Glu-170, and His-173.

Belongs to the COQ7 family. Requires Fe cation as cofactor.

The protein resides in the cell membrane. The enzyme catalyses a 5-methoxy-2-methyl-3-(all-trans-polyprenyl)benzene-1,4-diol + AH2 + O2 = a 3-demethylubiquinol + A + H2O. It participates in cofactor biosynthesis; ubiquinone biosynthesis. Catalyzes the hydroxylation of 2-nonaprenyl-3-methyl-6-methoxy-1,4-benzoquinol during ubiquinone biosynthesis. The sequence is that of 3-demethoxyubiquinol 3-hydroxylase from Cupriavidus metallidurans (strain ATCC 43123 / DSM 2839 / NBRC 102507 / CH34) (Ralstonia metallidurans).